The sequence spans 416 residues: Creatine kinase U-type, mitochondrial (416 aa).

Residues 1–39 (MAGPFSRLLSARPGLRLLALAGAGSLAAGFLLRPEPIRA) constitute a mitochondrion transit peptide. The interval 40 to 63 (ASERRRQYPPSAEYPDLRKHNNCM) is cardiolipin-binding. A Phosphagen kinase N-terminal domain is found at 44-131 (RRQYPPSAEY…FDPVIQERHN (88 aa)). The residue at position 151 (Ser-151) is a Phosphoserine. The region spanning 158 to 400 (YVLSSRVRTG…NYLIDCERRL (243 aa)) is the Phosphagen kinase C-terminal domain. Position 161-165 (161-165 (SSRVR)) interacts with ATP. Ser-196 is subject to Phosphoserine. Thr-213 is modified (phosphothreonine). His-224 is a binding site for ATP. Ser-232 carries the phosphoserine modification. ATP contacts are provided by residues Arg-269, Arg-325, and 353–358 (RGTGGV). Thr-355 carries the post-translational modification Phosphothreonine. Ser-365 carries the phosphoserine modification. Asp-368 contributes to the ATP binding site.

The protein belongs to the ATP:guanido phosphotransferase family. Exists as an octamer composed of four MTCK homodimers.

It is found in the mitochondrion inner membrane. The enzyme catalyses creatine + ATP = N-phosphocreatine + ADP + H(+). Its function is as follows. Reversibly catalyzes the transfer of phosphate between ATP and various phosphogens (e.g. creatine phosphate). Creatine kinase isoenzymes play a central role in energy transduction in tissues with large, fluctuating energy demands, such as skeletal muscle, heart, brain and spermatozoa. This is Creatine kinase U-type, mitochondrial (CKMT1) from Sus scrofa (Pig).